The following is a 690-amino-acid chain: Exonuclease GOR (690 aa).

Disordered stretches follow at residues 136-162 (TRVA…NRSG) and 567-690 (QPRH…SLHH). The span at 585–595 (APSTTAISPES) shows a compositional bias: polar residues. Over residues 605–614 (KETGAVDGRR) the composition is skewed to basic and acidic residues. A GOR14-1 epitope region spans residues 612-626 (GRRGQKAKSNPNRPL). A compositionally biased stretch (low complexity) spans 631–646 (NPCRGPSGLSPSLCPS). Pro residues predominate over residues 661–682 (PPLPVPRVPAAPPRACPHPSAH).

This sequence belongs to the REXO1/REXO3 family.

The protein resides in the cytoplasm. The protein localises to the nucleus. In Pan troglodytes (Chimpanzee), this protein is Exonuclease GOR (REXO1L1).